Here is a 270-residue protein sequence, read N- to C-terminus: Co-chaperone protein DjlA (270 aa).

Residues 1–6 (MNWIGK) lie on the Periplasmic side of the membrane. A helical membrane pass occupies residues 7–30 (LIGMMLGFILAGPIGLIIGLFIGH). The Cytoplasmic segment spans residues 31 to 270 (VVFDQGRFRQ…EQIRKVRSMV (240 aa)). In terms of domain architecture, J spans 204 to 270 (DAYKVLGLTS…EQIRKVRSMV (67 aa)).

As to quaternary structure, homodimer.

Its subcellular location is the cell inner membrane. Functionally, regulatory DnaK co-chaperone. Direct interaction between DnaK and DjlA is needed for the induction of the wcaABCDE operon, involved in the synthesis of a colanic acid polysaccharide capsule, possibly through activation of the RcsB/RcsC phosphotransfer signaling pathway. The colanic acid capsule may help the bacterium survive conditions outside the host. In Coxiella burnetii (strain RSA 493 / Nine Mile phase I), this protein is Co-chaperone protein DjlA.